The chain runs to 506 residues: 7,8-dihydro-6-hydroxymethylpterin dimethyltransferase (506 aa).

[4Fe-4S] cluster-binding residues include cysteine 73, cysteine 77, cysteine 80, cysteine 98, cysteine 102, and cysteine 105. The Radical SAM core domain maps to 82 to 300 (NHKSTTILAN…FIKLVEEQTD (219 aa)).

The protein belongs to the radical SAM superfamily. It depends on [4Fe-4S] cluster as a cofactor. S-adenosyl-L-methionine is required as a cofactor.

The protein operates within cofactor biosynthesis; 5,6,7,8-tetrahydromethanopterin biosynthesis. Functionally, is responsible for the addition of methyl groups at C-7 and C-9 of the pterin ring during methanopterin (MPT) biosynthesis. Catalyzes methylation of 7,8-dihydro-6-hydroxymethylpterin, likely using methylenetetrahydromethanopterin as a methyl group donor, via a radical-based mechanism. The chain is 7,8-dihydro-6-hydroxymethylpterin dimethyltransferase from Methanocaldococcus jannaschii (strain ATCC 43067 / DSM 2661 / JAL-1 / JCM 10045 / NBRC 100440) (Methanococcus jannaschii).